The sequence spans 162 residues: Large ribosomal subunit protein uL10 (162 aa).

This sequence belongs to the universal ribosomal protein uL10 family. In terms of assembly, part of the ribosomal stalk of the 50S ribosomal subunit. The N-terminus interacts with L11 and the large rRNA to form the base of the stalk. The C-terminus forms an elongated spine to which L12 dimers bind in a sequential fashion forming a multimeric L10(L12)X complex.

Its function is as follows. Forms part of the ribosomal stalk, playing a central role in the interaction of the ribosome with GTP-bound translation factors. This chain is Large ribosomal subunit protein uL10, found in Vibrio vulnificus (strain CMCP6).